The chain runs to 222 residues: Small ribosomal subunit protein eS1 (222 aa).

The protein belongs to the eukaryotic ribosomal protein eS1 family.

This Pyrobaculum calidifontis (strain DSM 21063 / JCM 11548 / VA1) protein is Small ribosomal subunit protein eS1.